We begin with the raw amino-acid sequence, 270 residues long: Shikimate dehydrogenase (NADP(+)) (270 aa).

Shikimate contacts are provided by residues 14–16 and threonine 61; that span reads SLS. Catalysis depends on lysine 65, which acts as the Proton acceptor. Aspartate 77 is a binding site for NADP(+). Residues asparagine 86 and aspartate 101 each contribute to the shikimate site. NADP(+) contacts are provided by residues 125–129 and isoleucine 210; that span reads GNGGA. Residue tyrosine 212 coordinates shikimate. Glycine 233 is a binding site for NADP(+).

Belongs to the shikimate dehydrogenase family. As to quaternary structure, homodimer.

The catalysed reaction is shikimate + NADP(+) = 3-dehydroshikimate + NADPH + H(+). It functions in the pathway metabolic intermediate biosynthesis; chorismate biosynthesis; chorismate from D-erythrose 4-phosphate and phosphoenolpyruvate: step 4/7. Functionally, involved in the biosynthesis of the chorismate, which leads to the biosynthesis of aromatic amino acids. Catalyzes the reversible NADPH linked reduction of 3-dehydroshikimate (DHSA) to yield shikimate (SA). The polypeptide is Shikimate dehydrogenase (NADP(+)) (Clostridium beijerinckii (strain ATCC 51743 / NCIMB 8052) (Clostridium acetobutylicum)).